We begin with the raw amino-acid sequence, 379 residues long: Succinate--CoA ligase [ADP-forming] subunit beta (379 aa).

The ATP-grasp domain maps to 9-236; the sequence is KEIARKYGIE…GRDATPYEKV (228 aa). ATP-binding positions include Lys46, 53 to 55, Glu92, Val95, and Glu100; that span reads GRG. Mg(2+) is bound by residues Asn192 and Asp206. Substrate-binding positions include Asn256 and 313–315; that span reads GIT.

It belongs to the succinate/malate CoA ligase beta subunit family. Heterotetramer of two alpha and two beta subunits. Mg(2+) serves as cofactor.

It catalyses the reaction succinate + ATP + CoA = succinyl-CoA + ADP + phosphate. It carries out the reaction GTP + succinate + CoA = succinyl-CoA + GDP + phosphate. The protein operates within carbohydrate metabolism; tricarboxylic acid cycle; succinate from succinyl-CoA (ligase route): step 1/1. In terms of biological role, succinyl-CoA synthetase functions in the citric acid cycle (TCA), coupling the hydrolysis of succinyl-CoA to the synthesis of either ATP or GTP and thus represents the only step of substrate-level phosphorylation in the TCA. The beta subunit provides nucleotide specificity of the enzyme and binds the substrate succinate, while the binding sites for coenzyme A and phosphate are found in the alpha subunit. This is Succinate--CoA ligase [ADP-forming] subunit beta from Desulfurococcus amylolyticus (strain DSM 18924 / JCM 16383 / VKM B-2413 / 1221n) (Desulfurococcus kamchatkensis).